The sequence spans 188 residues: Ribosome-recycling factor (188 aa).

It belongs to the RRF family.

Its subcellular location is the cytoplasm. Its function is as follows. Responsible for the release of ribosomes from messenger RNA at the termination of protein biosynthesis. May increase the efficiency of translation by recycling ribosomes from one round of translation to another. This chain is Ribosome-recycling factor, found in Gluconobacter oxydans (strain 621H) (Gluconobacter suboxydans).